Consider the following 104-residue polypeptide: AVIToxin-VAR2 (104 aa).

A signal peptide spans 1–19; sequence MRSLLCAPLLLLLLSAGES. 5 disulfides stabilise this stretch: C26/C38, C32/C50, C37/C78, C60/C86, and C80/C96.

It belongs to the AVIT (prokineticin) family. In terms of tissue distribution, expressed by the venom gland.

The protein resides in the secreted. Its function is as follows. Potent agonist for both PKR1/PROKR1 and PKR2/PROKR2. Potently contracts gastrointestinal (GI) smooth muscle. This Varanus varius (Lace monitor lizard) protein is AVIToxin-VAR2.